Here is a 150-residue protein sequence, read N- to C-terminus: Peptide methionine sulfoxide reductase MsrB (150 aa).

The MsrB domain occupies 9–132 (EAELKRTLTK…NSAALKFIPF (124 aa)). The Nucleophile role is filled by Cys121.

The protein belongs to the MsrB Met sulfoxide reductase family.

It carries out the reaction L-methionyl-[protein] + [thioredoxin]-disulfide + H2O = L-methionyl-(R)-S-oxide-[protein] + [thioredoxin]-dithiol. The polypeptide is Peptide methionine sulfoxide reductase MsrB (Mycoplasma genitalium (strain ATCC 33530 / DSM 19775 / NCTC 10195 / G37) (Mycoplasmoides genitalium)).